We begin with the raw amino-acid sequence, 85 residues long: uncharacterized protein (85 aa).

A run of 2 helical transmembrane segments spans residues Lys13–Leu35 and Glu59–Leu81.

It localises to the cell membrane. This is an uncharacterized protein from Archaeoglobus fulgidus (strain ATCC 49558 / DSM 4304 / JCM 9628 / NBRC 100126 / VC-16).